Reading from the N-terminus, the 429-residue chain is Probable M18 family aminopeptidase 2 (429 aa).

Zn(2+) contacts are provided by His-82, His-156, and His-401.

Belongs to the peptidase M18 family. It depends on Zn(2+) as a cofactor.

This Pseudomonas fluorescens (strain Pf0-1) protein is Probable M18 family aminopeptidase 2.